Reading from the N-terminus, the 234-residue chain is Protein CIST1 (234 aa).

An N-terminal signal peptide occupies residues Met1–Tyr24. The Extracellular portion of the chain corresponds to Asn25–Ser180. The segment covering Ser41 to Ala121 has biased composition (polar residues). The segment at Ser41 to Glu174 is disordered. The span at Glu122–His140 shows a compositional bias: low complexity. Over residues Trp141–Thr159 the composition is skewed to polar residues. The helical transmembrane segment at Val181–Val201 threads the bilayer. At Arg202 to Glu234 the chain is on the cytoplasmic side.

The protein resides in the membrane. The polypeptide is Protein CIST1 (Homo sapiens (Human)).